A 345-amino-acid chain; its full sequence is NADPH dehydrogenase (345 aa).

Residue 23 to 26 (SPMC) participates in FMN binding. Tyr28 contributes to the substrate binding site. Residues Ala60 and Gln102 each coordinate FMN. Residue 164–167 (HGAH) participates in substrate binding. FMN-binding positions include Arg215 and 307 to 308 (GR).

Belongs to the NADH:flavin oxidoreductase/NADH oxidase family. NamA subfamily. Homotetramer. FMN serves as cofactor.

The catalysed reaction is A + NADPH + H(+) = AH2 + NADP(+). Its function is as follows. Catalyzes the reduction of the double bond of an array of alpha,beta-unsaturated aldehydes and ketones. It also reduces the nitro group of nitroester and nitroaromatic compounds. It could have a role in detoxification processes. The protein is NADPH dehydrogenase of Bacillus anthracis (strain CDC 684 / NRRL 3495).